Reading from the N-terminus, the 369-residue chain is tRNA pseudouridine synthase D (369 aa).

Catalysis depends on aspartate 80, which acts as the Nucleophile. In terms of domain architecture, TRUD spans 156 to 318; that stretch reads GIPNWFGEQR…LKQERRALRL (163 aa).

This sequence belongs to the pseudouridine synthase TruD family.

It carries out the reaction uridine(13) in tRNA = pseudouridine(13) in tRNA. Responsible for synthesis of pseudouridine from uracil-13 in transfer RNAs. The polypeptide is tRNA pseudouridine synthase D (Xanthomonas euvesicatoria pv. vesicatoria (strain 85-10) (Xanthomonas campestris pv. vesicatoria)).